A 485-amino-acid polypeptide reads, in one-letter code: UDP-N-acetylmuramate--L-alanine ligase (485 aa).

120 to 126 (GSHGKTT) contacts ATP.

It belongs to the MurCDEF family.

Its subcellular location is the cytoplasm. The catalysed reaction is UDP-N-acetyl-alpha-D-muramate + L-alanine + ATP = UDP-N-acetyl-alpha-D-muramoyl-L-alanine + ADP + phosphate + H(+). It participates in cell wall biogenesis; peptidoglycan biosynthesis. Cell wall formation. The protein is UDP-N-acetylmuramate--L-alanine ligase of Rickettsia rickettsii (strain Iowa).